Reading from the N-terminus, the 219-residue chain is MGQKINPTGFRVGVIRDWDAKWYAEKDFATFLHEDLKIRKYINTKLADASVSTIEIERAANRVNVSIHTAKPGMVIGKGGSEVENLRKALNNLTGKKVHINIVEIKKPDLDAHLVGEGIARQLEARVAFRRAQRQAMQRTMRAGAKGIKTQVAGRLNGADMSRIETHAQGTVPLHTLRADIDYSWDEAMTTYGKLGVKTWIYRGEVLPAKANNNTKGGK.

Residues 38–106 enclose the KH type-2 domain; it reads IRKYINTKLA…KVHINIVEIK (69 aa).

Belongs to the universal ribosomal protein uS3 family. As to quaternary structure, part of the 30S ribosomal subunit. Forms a tight complex with proteins S10 and S14.

Its function is as follows. Binds the lower part of the 30S subunit head. Binds mRNA in the 70S ribosome, positioning it for translation. In Latilactobacillus sakei subsp. sakei (strain 23K) (Lactobacillus sakei subsp. sakei), this protein is Small ribosomal subunit protein uS3.